The following is a 62-amino-acid chain: uncharacterized protein (62 aa).

A helical transmembrane segment spans residues 15–37 (FSSGVLISNFLLFNFIIISHSSL). Residues 41–56 (TTTTTTTTTTTTNTKS) show a composition bias toward low complexity. The tract at residues 41 to 62 (TTTTTTTTTTTTNTKSTLHRSG) is disordered.

The protein resides in the membrane. This is an uncharacterized protein from Dictyostelium discoideum (Social amoeba).